An 875-amino-acid polypeptide reads, in one-letter code: cGMP-specific 3',5'-cyclic phosphodiesterase (875 aa).

Disordered stretches follow at residues 1 to 29 (MERAGPSFGQQRQQQQPQQQKQQQRDQDS) and 78 to 102 (SCSCPLQQSPRADNSAPGTPTRKIS). A compositionally biased stretch (low complexity) spans 10 to 22 (QQRQQQQPQQQKQ). Residues 78-101 (SCSCPLQQSPRADNSAPGTPTRKI) show a composition bias toward polar residues. At S102 the chain carries Phosphoserine. GAF domains lie at 164–314 (DVTA…GIVL) and 346–503 (SLEV…GLGI). Positions 536-860 (ETRELQSLAA…QKWQALAEQQ (325 aa)) constitute a PDEase domain. H613 functions as the Proton donor in the catalytic mechanism. The Zn(2+) site is built by H617, H653, D654, and D764. D654 lines the Mg(2+) pocket. 3',5'-cyclic GMP is bound at residue Q817.

It belongs to the cyclic nucleotide phosphodiesterase family. It depends on Zn(2+) as a cofactor. Requires Mg(2+) as cofactor. In terms of processing, phosphorylation is regulated by binding of cGMP to the two allosteric sites. Phosphorylation by PRKG1 leads to its activation. As to expression, expressed in aortic smooth muscle cells, heart, placenta, skeletal muscle and pancreas and, to a much lesser extent, in brain, liver and lung.

It catalyses the reaction 3',5'-cyclic GMP + H2O = GMP + H(+). The protein operates within purine metabolism; 3',5'-cyclic GMP degradation; GMP from 3',5'-cyclic GMP: step 1/1. Its activity is regulated as follows. Sildenafil (Viagra) is a highly selective and potent inhibitor of PDE5A and is effective in the treatment of penile erectile dysfunction. Also inhibited by zaprinast. In terms of biological role, plays a role in signal transduction by regulating the intracellular concentration of cyclic nucleotides. This phosphodiesterase catalyzes the specific hydrolysis of cGMP to 5'-GMP. Specifically regulates nitric-oxide-generated cGMP. The protein is cGMP-specific 3',5'-cyclic phosphodiesterase of Homo sapiens (Human).